The primary structure comprises 71 residues: Small ribosomal subunit protein bS21 (71 aa).

The protein belongs to the bacterial ribosomal protein bS21 family.

In Hahella chejuensis (strain KCTC 2396), this protein is Small ribosomal subunit protein bS21.